The chain runs to 111 residues: Ribonuclease P protein component (111 aa).

The protein belongs to the RnpA family. Consists of a catalytic RNA component (M1 or rnpB) and a protein subunit.

The enzyme catalyses Endonucleolytic cleavage of RNA, removing 5'-extranucleotides from tRNA precursor.. Functionally, RNaseP catalyzes the removal of the 5'-leader sequence from pre-tRNA to produce the mature 5'-terminus. It can also cleave other RNA substrates such as 4.5S RNA. The protein component plays an auxiliary but essential role in vivo by binding to the 5'-leader sequence and broadening the substrate specificity of the ribozyme. This Clostridium botulinum (strain Loch Maree / Type A3) protein is Ribonuclease P protein component.